The chain runs to 313 residues: MQLQYVLTLLWIIFAQNVFSRPTISKVAPENIEFFGRVTSYQKPVKVPDPISMYQQFAGLAQQSNCFKTKINATIGDAQLLFSWGDDDKNQRMQIFRSKSLGIVTSWSGMNVTSLTSLLSAADLFLVDVDRKYFPRVKKGSKLYDGFQNAFKRAAPVLVKKIQYFQELYDEDRVSLTGLSFGAALADIALPYVKENLKRGHIHRVVVFGHPRIGNQEWADSLDTYAEGKFFYVVNGNDIVPHLPPREFGYQQPSGQIWINPSNSSNWKLYPGQENVHGANSIFGFSIKDHTGVYFRTEIGSFWGHCPATIGQD.

A signal peptide spans 1 to 20 (MQLQYVLTLLWIIFAQNVFS). Cys66 and Cys306 are disulfide-bonded. 2 N-linked (GlcNAc...) asparagine glycosylation sites follow: Asn72 and Asn111. Catalysis depends on Ser180, which acts as the Nucleophile. The active site involves Asp238. An N-linked (GlcNAc...) asparagine glycan is attached at Asn263. Residue His290 is part of the active site.

Belongs to the AB hydrolase superfamily. Lipase family. Class 3 subfamily.

The protein localises to the secreted. It is found in the cell wall. The enzyme catalyses a monoacylglycerol + H2O = glycerol + a fatty acid + H(+). It carries out the reaction a diacylglycerol + H2O = a monoacylglycerol + a fatty acid + H(+). Secreted lipase involved in Dandruff and seborrheic dermatitis (D/SD) probably via lipase-mediated breakdown of sebaceous lipids and release of irritating free fatty acids. Shows activity against monoglyceride and diglyceride substrates, but not triglyceride substrates and does not exhibit regio-selective production of diacylglycerols. Cleaves oleic acid from 1,2 isomers of diolein on both the 1 and the 2 position of the glycerol backbone, resulting mainly in free fatty acids but no monoolein is detected. Shows activity on monoolein and liberates mostly free fatty acids, but can also perform the reverse reaction and produce diolein. This chain is Secreted mono- and diacylglycerol lipase MDL5, found in Malassezia globosa (strain ATCC MYA-4612 / CBS 7966) (Dandruff-associated fungus).